Reading from the N-terminus, the 519-residue chain is Probable cytochrome P450 513D1 (519 aa).

Residues 1-21 traverse the membrane as a helical segment; that stretch reads MGISSIIIILFIIVLLKKLIK. Residue Cys464 participates in heme binding.

Belongs to the cytochrome P450 family. It depends on heme as a cofactor.

The protein localises to the membrane. The polypeptide is Probable cytochrome P450 513D1 (cyp513D1) (Dictyostelium discoideum (Social amoeba)).